A 166-amino-acid polypeptide reads, in one-letter code: Interferon gamma (166 aa).

Residues 1-23 (MKYTSYFLALLLCVLLGFSGSYG) form the signal peptide. Gln24 is modified (pyrrolidone carboxylic acid). Asn39 and Asn106 each carry an N-linked (GlcNAc...) asparagine glycan.

The protein belongs to the type II (or gamma) interferon family. In terms of assembly, homodimer. Interacts with IFNGR1 (via extracellular domain); this interaction promotes IFNGR1 dimerization. Released primarily from activated T lymphocytes.

It is found in the secreted. Functionally, type II interferon produced by immune cells such as T-cells and NK cells that plays crucial roles in antimicrobial, antiviral, and antitumor responses by activating effector immune cells and enhancing antigen presentation. Primarily signals through the JAK-STAT pathway after interaction with its receptor IFNGR1 to affect gene regulation. Upon IFNG binding, IFNGR1 intracellular domain opens out to allow association of downstream signaling components JAK2, JAK1 and STAT1, leading to STAT1 activation, nuclear translocation and transcription of IFNG-regulated genes. Many of the induced genes are transcription factors such as IRF1 that are able to further drive regulation of a next wave of transcription. Plays a role in class I antigen presentation pathway by inducing a replacement of catalytic proteasome subunits with immunoproteasome subunits. In turn, increases the quantity, quality, and repertoire of peptides for class I MHC loading. Increases the efficiency of peptide generation also by inducing the expression of activator PA28 that associates with the proteasome and alters its proteolytic cleavage preference. Up-regulates as well MHC II complexes on the cell surface by promoting expression of several key molecules such as cathepsins B/CTSB, H/CTSH, and L/CTSL. Participates in the regulation of hematopoietic stem cells during development and under homeostatic conditions by affecting their development, quiescence, and differentiation. This chain is Interferon gamma (IFNG), found in Bos indicus (Zebu).